Here is a 122-residue protein sequence, read N- to C-terminus: Large ribosomal subunit protein bL12 (122 aa).

Belongs to the bacterial ribosomal protein bL12 family. As to quaternary structure, homodimer. Part of the ribosomal stalk of the 50S ribosomal subunit. Forms a multimeric L10(L12)X complex, where L10 forms an elongated spine to which 2 to 4 L12 dimers bind in a sequential fashion. Binds GTP-bound translation factors.

Forms part of the ribosomal stalk which helps the ribosome interact with GTP-bound translation factors. Is thus essential for accurate translation. The polypeptide is Large ribosomal subunit protein bL12 (Actinobacillus succinogenes (strain ATCC 55618 / DSM 22257 / CCUG 43843 / 130Z)).